The chain runs to 370 residues: Ribosomal RNA small subunit methyltransferase H (370 aa).

S-adenosyl-L-methionine-binding positions include Gly85–His87, Asp104, Tyr131, Asp152, and Gln159. Basic and acidic residues-rich tracts occupy residues Gly332–Pro345 and Arg353–Arg370. The segment at Gly332–Arg370 is disordered.

This sequence belongs to the methyltransferase superfamily. RsmH family.

It is found in the cytoplasm. The catalysed reaction is cytidine(1402) in 16S rRNA + S-adenosyl-L-methionine = N(4)-methylcytidine(1402) in 16S rRNA + S-adenosyl-L-homocysteine + H(+). Specifically methylates the N4 position of cytidine in position 1402 (C1402) of 16S rRNA. In Mycobacterium sp. (strain KMS), this protein is Ribosomal RNA small subunit methyltransferase H.